Consider the following 243-residue polypeptide: Ribonuclease 3 (243 aa).

The region spanning 10–146 (VNRFRKRFDT…FIGALYLDQG (137 aa)) is the RNase III domain. Mg(2+) is bound at residue glutamate 59. The active site involves aspartate 63. Aspartate 132 and glutamate 135 together coordinate Mg(2+). Residue glutamate 135 is part of the active site. Residues 172–241 (DFKTQFQEYV…AESAYKQLKQ (70 aa)) form the DRBM domain. Positions 219 to 231 (GKGKTKKESEQRA) are enriched in basic and acidic residues. Residues 219 to 243 (GKGKTKKESEQRAAESAYKQLKQIK) are disordered.

Belongs to the ribonuclease III family. Homodimer. Requires Mg(2+) as cofactor.

It localises to the cytoplasm. It carries out the reaction Endonucleolytic cleavage to 5'-phosphomonoester.. Its function is as follows. Digests double-stranded RNA. Involved in the processing of primary rRNA transcript to yield the immediate precursors to the large and small rRNAs (23S and 16S). Processes some mRNAs, and tRNAs when they are encoded in the rRNA operon. Processes pre-crRNA and tracrRNA of type II CRISPR loci if present in the organism. The protein is Ribonuclease 3 of Staphylococcus aureus (strain USA300).